We begin with the raw amino-acid sequence, 1350 residues long: Nicotinate hydroxylase hnxS (1350 aa).

C49, C54, C89, C92, C133, and C135 together coordinate [2Fe-2S] cluster. Positions 164–193 are disordered; the sequence is LVGTEEETESDMGAHSGSGDTGSRSSGSCG. Residues 180–192 are compositionally biased toward low complexity; the sequence is GSGDTGSRSSGSC. Residues 256–445 enclose the FAD-binding PCMH-type domain; the sequence is YGDAEQAWVK…TKIAVPMPSK (190 aa). FAD is bound by residues 284 to 291, 379 to 383, D392, and K455; these read LVTGASEV and CLAGN. Positions 793 and 824 each coordinate Mo-molybdopterin. Substrate-binding residues include E828 and R906. Residues R938 and A1107 each contribute to the Mo-molybdopterin site. Catalysis depends on E1281, which acts as the Proton acceptor.

This sequence belongs to the xanthine dehydrogenase family. Requires [2Fe-2S] cluster as cofactor. It depends on FAD as a cofactor. Mo-molybdopterin serves as cofactor.

Allopurinol inhibits catalytic activity in a linear fashion. In terms of biological role, nicotinate hydroxylase, part of the hnx cluster involved in the purine degradation. The nicotinate hydroxylase hnxS accepts nicotinate as a substrate and catalyzes the first step of nicotinate catabolism. HnxS also accepts hypoxanthine, but not xanthine, as a substrate. The major facilitator-type transporters hxnP and hxnZ are probably involved in the uptake of nicotinate-derived metabolites, and the oxidoreductases hxnT and hxnY in the further metabolism of 6-OH nicotinic acid. This is Nicotinate hydroxylase hnxS from Emericella nidulans (strain FGSC A4 / ATCC 38163 / CBS 112.46 / NRRL 194 / M139) (Aspergillus nidulans).